The following is a 222-amino-acid chain: MVTFFENELSAKKRNQRRGFLFILSSPSGAGKSTLSRLLLKDGKLELSISMTTRQKRPSEVDGLHYHFISKKEFKRKRDGNEFIEWAEVHGNYYGTLRESVENVLSTGRDMLFDIDYQGTKQLQKKMPGDTVSVFILPPSMKELISRLYRRAEDSQDIINLRLKNARTEMQHWRSYDYVIINENLNQSVSLIKSIYLAETVKRERCFFLEPFINGLIAEKID.

Residues 19 to 197 (GFLFILSSPS…SVSLIKSIYL (179 aa)) form the Guanylate kinase-like domain. Residue 26-33 (SPSGAGKS) participates in ATP binding.

Belongs to the guanylate kinase family.

It localises to the cytoplasm. The enzyme catalyses GMP + ATP = GDP + ADP. Functionally, essential for recycling GMP and indirectly, cGMP. This Bartonella henselae (strain ATCC 49882 / DSM 28221 / CCUG 30454 / Houston 1) (Rochalimaea henselae) protein is Guanylate kinase.